Here is a 913-residue protein sequence, read N- to C-terminus: MKEDTIIQKNLFAIDNENNEQKEITKIPEDLSWEDLKKESQKRPRQRKNTTNLINKFKTDLISKNKNVCINEESYSYKTVSKLKLTPVMKHYVTLKEENKDRLLLYRLGDFFECFFEDAVLISNLLEITLTSKDAGKEIGKIPMAGVPYHAMERYCADLIKKNYSVVICDQLEKSSGNYGTPIKRGITRIITPGTVIEEGMLIAKKNNWITAIYLSEENSNESYEWGISKADVSTGELITMEGQSLSKLFDEIIKLDSSEIIIGSNEVRNLLMNGNSQISYTVSQETNFGINEANYLIKKYFQIVSLEGIGLKNLNNATRSLGGLLNYLKKINPLNLDKDSSVKISLDFPQIQFCHNKLIIDYQTQKNLEIKNTQRENNYVGSLLWSIDRTYTCMGARCLRRWIDSPLLNVNEIYKRQNIISNFIESKQVRMDTQNLLRAMGDLERLAGRACAGHASPRDLIAIAEGLKKLPRIKSIIELFKYDLPDWTDQLKNIDEELLELADTISFQLIEHPPLNISEGGMIHDGVDNILDGLRNLMDDYSEWLNQEELKERKISKISNLKIQFHKNFGYYISINKSKVNLAPQHWIKRQTLTNEERYITTDIKNKENKIFQIKSRASSREYEIFCELRKMVAEKTKQIRSIAKSIASLDALLGLSITSVENNFIKPALIPINDSQKKNSTKIIAGRNPIVEQLLNDKKFTANDICFDDNQKLIILTGPNASGKSCFIRQIGLIQILAQIGSFIPANKAEIKIADRIFTRIGAVDDQSSGQSTFMVEMSETASILNQATSSSLVLLDEIGRGTSTFDGLSIAWSVSEYLAKKIKCNTIFATHYHELNYLKNSNKNIENFQVLVEQNNDQIIFSHKIKKGGSNKSYGIEAAKLAGVPREVIEKAKLVLNSLEENNKFNKNND.

720 to 727 (GPNASGKS) is an ATP binding site.

This sequence belongs to the DNA mismatch repair MutS family.

Functionally, this protein is involved in the repair of mismatches in DNA. It is possible that it carries out the mismatch recognition step. This protein has a weak ATPase activity. This Prochlorococcus marinus (strain MIT 9312) protein is DNA mismatch repair protein MutS.